The primary structure comprises 166 residues: Ribosome maturation factor RimM (166 aa).

One can recognise a PRC barrel domain in the interval E94–L165.

This sequence belongs to the RimM family. Binds ribosomal protein uS19.

It localises to the cytoplasm. An accessory protein needed during the final step in the assembly of 30S ribosomal subunit, possibly for assembly of the head region. Essential for efficient processing of 16S rRNA. May be needed both before and after RbfA during the maturation of 16S rRNA. It has affinity for free ribosomal 30S subunits but not for 70S ribosomes. This is Ribosome maturation factor RimM from Borreliella afzelii (strain PKo) (Borrelia afzelii).